We begin with the raw amino-acid sequence, 173 residues long: MSTSAVLFLLLAVFAAGASAATFNIKNNCGSTIWPAGIPVGGGFELGSGQTSSINVPAGTQAGRIWARTGCSFNGGSGSCQTGDCGGQLSCSLSGRPPATLAEFTIGGGSTQDFYDISVIDGFNLAMDFSCSTGDALQCRDPSCPPPQAYQHPNDVATHACSGNNNYQITFCP.

The N-terminal stretch at 1–20 (MSTSAVLFLLLAVFAAGASA) is a signal peptide.

Belongs to the thaumatin family.

This is Pathogenesis-related protein 1C from Hordeum vulgare (Barley).